The chain runs to 469 residues: Dihydrolipoyl dehydrogenase (469 aa).

FAD is bound by residues 34 to 42 (EKQYWGGVC), K51, and G114. A disulfide bond links C42 and C47. NAD(+) contacts are provided by residues 179 to 183 (GAGAI), E202, and 269 to 272 (SVGF). FAD contacts are provided by D312 and A320. H448 functions as the Proton acceptor in the catalytic mechanism.

This sequence belongs to the class-I pyridine nucleotide-disulfide oxidoreductase family. As to quaternary structure, homodimer. Part of an unusual ODH/PDH supercomplex, consisting of AceE (E1), AceF (E2), and Lpd (E3) together with OdhA (E1+E2). FAD serves as cofactor.

Its subcellular location is the cytoplasm. It catalyses the reaction N(6)-[(R)-dihydrolipoyl]-L-lysyl-[protein] + NAD(+) = N(6)-[(R)-lipoyl]-L-lysyl-[protein] + NADH + H(+). It participates in carbohydrate metabolism; tricarboxylic acid cycle; succinyl-CoA from 2-oxoglutarate (dehydrogenase route): step 1/1. In terms of biological role, lipoamide dehydrogenase is an essential component of the pyruvate dehydrogenase (PDH) and 2-oxoglutarate dehydrogenase (ODH) complexes. Catalyzes the reoxidation of dihydrolipoyl groups which are covalently attached to the lipoate acyltransferase components (E2) of the complexes. Also catalyzes a reversible NADH:NAD(+) transhydrogenation, and is able to transfer electrons from NADH to various redox-active compounds and quinones. May be involved in quinone redox cycling in C.glutamicum. The sequence is that of Dihydrolipoyl dehydrogenase (lpd) from Corynebacterium glutamicum (strain ATCC 13032 / DSM 20300 / JCM 1318 / BCRC 11384 / CCUG 27702 / LMG 3730 / NBRC 12168 / NCIMB 10025 / NRRL B-2784 / 534).